We begin with the raw amino-acid sequence, 102 residues long: uncharacterized protein (102 aa).

This is an uncharacterized protein from Schizosaccharomyces pombe (strain 972 / ATCC 24843) (Fission yeast).